A 354-amino-acid polypeptide reads, in one-letter code: MNEAIIQLDHIDITFRQKKRVIEAVKDVTVHINQGDIYGIVGYSGAGKSTLVRVINLLQAPTNGKITVDGDVTFDQGKIQLSADALRQKRRDIGMIFQHFNLMAQKTAKENVAFALRHSSLSKTEKEHKVIELLELVGLSERADNYPAQLSGGQKQRVAIARALANDPKILISDEATSALDPKTTKQILALLQELNCKLGLTIVMITHEMQIVKDICNRVAVMQNGVLIEEGSVLDIFSNPKEALTQEFITTATGIDEALEKINQQDIVKHLPANALLAQLKYAGTSTDEPLLNSIYRQFEVTANILYGNIEILDHIPVGDMIVVLEGQAENILAAEKALHEAGVDVSILKRGA.

Positions 8 to 250 (LDHIDITFRQ…PKEALTQEFI (243 aa)) constitute an ABC transporter domain. 42 to 49 (GYSGAGKS) lines the ATP pocket.

It belongs to the ABC transporter superfamily. Methionine importer (TC 3.A.1.24) family. In terms of assembly, the complex is composed of two ATP-binding proteins (MetN), two transmembrane proteins (MetI) and a solute-binding protein (MetQ).

It localises to the cell membrane. The catalysed reaction is L-methionine(out) + ATP + H2O = L-methionine(in) + ADP + phosphate + H(+). The enzyme catalyses D-methionine(out) + ATP + H2O = D-methionine(in) + ADP + phosphate + H(+). Part of the ABC transporter complex MetNIQ involved in methionine import. Responsible for energy coupling to the transport system. This chain is Methionine import ATP-binding protein MetN, found in Streptococcus pyogenes serotype M2 (strain MGAS10270).